We begin with the raw amino-acid sequence, 113 residues long: Iron-sulfur cluster insertion protein ErpA (113 aa).

Residues Cys41, Cys105, and Cys107 each contribute to the iron-sulfur cluster site.

It belongs to the HesB/IscA family. As to quaternary structure, homodimer. Requires iron-sulfur cluster as cofactor.

Functionally, required for insertion of 4Fe-4S clusters for at least IspG. This Vibrio vulnificus (strain YJ016) protein is Iron-sulfur cluster insertion protein ErpA.